We begin with the raw amino-acid sequence, 233 residues long: Probable fimbrial chaperone protein ElfD (233 aa).

The signal sequence occupies residues 1 to 26 (MKTCITKGIVTVSLTAILLSCSSTWA).

The protein belongs to the periplasmic pilus chaperone family.

It is found in the periplasm. Part of the elfADCG fimbrial operon, which could be required for adherence to host epithelial cells. Could be required for the biogenesis of the ElfA fimbriae. This Escherichia coli O157:H7 protein is Probable fimbrial chaperone protein ElfD (elfD).